We begin with the raw amino-acid sequence, 437 residues long: Methionine aminopeptidase 2 (437 aa).

The segment at 1 to 90 (MAAQAAPAEE…LFPNNQYPKG (90 aa)) is disordered. The segment covering 10-20 (ELSKLSVDETK) has biased composition (basic and acidic residues). Acidic residues predominate over residues 31–42 (SDAESGDEEAEE). Over residues 52–66 (AKKKKKRKPKKKKKA) the composition is skewed to basic residues. H190 is a substrate binding site. A divalent metal cation-binding residues include D210, D221, and H290. A substrate-binding site is contributed by H298. Residues E323 and E418 each contribute to the a divalent metal cation site.

It belongs to the peptidase M24A family. Methionine aminopeptidase eukaryotic type 2 subfamily. Co(2+) is required as a cofactor. Zn(2+) serves as cofactor. The cofactor is Mn(2+). Requires Fe(2+) as cofactor.

The protein resides in the cytoplasm. It catalyses the reaction Release of N-terminal amino acids, preferentially methionine, from peptides and arylamides.. Functionally, cotranslationally removes the N-terminal methionine from nascent proteins. The N-terminal methionine is often cleaved when the second residue in the primary sequence is small and uncharged (Met-Ala-, Cys, Gly, Pro, Ser, Thr, or Val). The sequence is that of Methionine aminopeptidase 2 from Neurospora crassa (strain ATCC 24698 / 74-OR23-1A / CBS 708.71 / DSM 1257 / FGSC 987).